Here is a 317-residue protein sequence, read N- to C-terminus: Terpene synthase 3 (317 aa).

Residues aspartate 96–glutamate 101 carry the DDxx(x)D/E motif motif. The short motif at asparagine 223–glutamate 231 is the NDxxSxxxD/E motif element.

Belongs to the terpene synthase family.

Functionally, terpene synthase that converts its substrate farnesyl diphosphate (FPP) into the sesquiterpene CAS 137235-51-9 as a major product. Is also able to convert FPP into 9-epi-(E)-caryophyllene, alpha-neoclovene, beta-neoclovene, and 3 yet unidentified sesquiterpenes. The polypeptide is Terpene synthase 3 (Dictyostelium purpureum (Slime mold)).